We begin with the raw amino-acid sequence, 112 residues long: T cell receptor alpha variable 30 (112 aa).

The N-terminal stretch at 1 to 21 (METLLKVLSGTLLWQLTWVRS) is a signal peptide. The Ig-like domain occupies 24-112 (PVQSPQAVIL…YSGTYFCGTE (89 aa)). The N-linked (GlcNAc...) asparagine glycan is linked to Asn-42. Residues Cys-43 and Cys-109 are joined by a disulfide bond.

In terms of assembly, alpha-beta TR is a heterodimer composed of an alpha and beta chain; disulfide-linked. The alpha-beta TR is associated with the transmembrane signaling CD3 coreceptor proteins to form the TR-CD3 (TcR or TCR). The assembly of alpha-beta TR heterodimers with CD3 occurs in the endoplasmic reticulum where a single alpha-beta TR heterodimer associates with one CD3D-CD3E heterodimer, one CD3G-CD3E heterodimer and one CD247 homodimer forming a stable octameric structure. CD3D-CD3E and CD3G-CD3E heterodimers preferentially associate with TR alpha and TR beta chains, respectively. The association of the CD247 homodimer is the last step of TcR assembly in the endoplasmic reticulum and is required for transport to the cell surface.

Its subcellular location is the cell membrane. Functionally, v region of the variable domain of T cell receptor (TR) alpha chain that participates in the antigen recognition. Alpha-beta T cell receptors are antigen specific receptors which are essential to the immune response and are present on the cell surface of T lymphocytes. Recognize peptide-major histocompatibility (MH) (pMH) complexes that are displayed by antigen presenting cells (APC), a prerequisite for efficient T cell adaptive immunity against pathogens. Binding of alpha-beta TR to pMH complex initiates TR-CD3 clustering on the cell surface and intracellular activation of LCK that phosphorylates the ITAM motifs of CD3G, CD3D, CD3E and CD247 enabling the recruitment of ZAP70. In turn ZAP70 phosphorylates LAT, which recruits numerous signaling molecules to form the LAT signalosome. The LAT signalosome propagates signal branching to three major signaling pathways, the calcium, the mitogen-activated protein kinase (MAPK) kinase and the nuclear factor NF-kappa-B (NF-kB) pathways, leading to the mobilization of transcription factors that are critical for gene expression and essential for T cell growth and differentiation. The T cell repertoire is generated in the thymus, by V-(D)-J rearrangement. This repertoire is then shaped by intrathymic selection events to generate a peripheral T cell pool of self-MH restricted, non-autoaggressive T cells. Post-thymic interaction of alpha-beta TR with the pMH complexes shapes TR structural and functional avidity. This Homo sapiens (Human) protein is T cell receptor alpha variable 30.